The chain runs to 350 residues: Quinolinate phosphoribosyltransferase [decarboxylating] 1b (350 aa).

Substrate is bound by residues R141, 172-174 (TRK), R196, K206, E239, D266, 298-300 (SGN), and 319-321 (SGA).

This sequence belongs to the NadC/ModD family.

The catalysed reaction is nicotinate beta-D-ribonucleotide + CO2 + diphosphate = quinolinate + 5-phospho-alpha-D-ribose 1-diphosphate + 2 H(+). It participates in alkaloid biosynthesis; nicotine biosynthesis. It functions in the pathway cofactor biosynthesis; NAD(+) biosynthesis; nicotinate D-ribonucleotide from quinolinate: step 1/1. Its function is as follows. Involved in the biosynthesis of pyridine alkaloid natural products, leading mainly to the production of anabasine, anatabine, nicotine and nornicotine, effective deterrents against herbivores with antiparasitic and pesticide properties (neurotoxins); nornicotine serves as the precursor in the synthesis of the carcinogen compound N'-nitrosonornicotine (NNN). Involved in the catabolism of quinolinic acid (QA). In Nicotiana tabacum (Common tobacco), this protein is Quinolinate phosphoribosyltransferase [decarboxylating] 1b.